The chain runs to 437 residues: Probable N-acetylmuramidase (437 aa).

An N-terminal signal peptide occupies residues 1–57; sequence MPVSRVKVKNRHLKKKTKKPLAFYKPATKFAGAVLIAGTLTTTHELLLQQTSPMVQA. Disordered stretches follow at residues 217–244, 290–320, and 367–392; these read SSAG…SSTT, ASST…SQTT, and AASN…NSNA. One can recognise a LysM 1 domain in the interval 243 to 286; it reads TTYTVKSGDTLWGISQRYGISVAQIQSANNLKSTIIYIGQKLVL. Over residues 290–317 the composition is skewed to low complexity; sequence ASSTNSGGSNNSASTTPTTSVTPAKPTS. The LysM 2 domain maps to 319 to 362; the sequence is TTVKVKSGDTLWALSVKYKTSIAQLKSWNHLSSDTIYIGQNLIV. The LysM 3 domain occupies 393–436; that stretch reads SIHKVVKGDTLWGLSQKSGSPIASIKAWNHLSSDTILIGQYLRI.

The protein belongs to the glycosyl hydrolase 73 family.

It localises to the secreted. The catalysed reaction is Hydrolysis of (1-&gt;4)-beta-linkages between N-acetylmuramic acid and N-acetyl-D-glucosamine residues in a peptidoglycan and between N-acetyl-D-glucosamine residues in chitodextrins.. Hydrolyzes the cell wall of L.lactis and M.lysodeikticus. Required for cell separation during growth. This chain is Probable N-acetylmuramidase (acmA), found in Lactococcus lactis subsp. cremoris (strain MG1363).